A 414-amino-acid polypeptide reads, in one-letter code: Pre-mRNA-processing protein 45 (414 aa).

Disordered regions lie at residues 128–159 (ESKR…DTPI) and 264–292 (RSKI…KKIK). The segment covering 135–146 (LQPSRQKNTSSK) has biased composition (polar residues).

It belongs to the SNW family. In terms of assembly, associated with the spliceosome.

The protein localises to the nucleus. Its function is as follows. Involved in pre-mRNA splicing. This is Pre-mRNA-processing protein 45 (PRP45) from Candida glabrata (strain ATCC 2001 / BCRC 20586 / JCM 3761 / NBRC 0622 / NRRL Y-65 / CBS 138) (Yeast).